The sequence spans 147 residues: Nucleoside diphosphate kinase (147 aa).

The ATP site is built by Lys9, Phe57, Arg85, Thr91, Arg102, and Asn112. His115 serves as the catalytic Pros-phosphohistidine intermediate.

The protein belongs to the NDK family. Homotetramer. Mg(2+) is required as a cofactor.

The protein localises to the cytoplasm. It catalyses the reaction a 2'-deoxyribonucleoside 5'-diphosphate + ATP = a 2'-deoxyribonucleoside 5'-triphosphate + ADP. The enzyme catalyses a ribonucleoside 5'-diphosphate + ATP = a ribonucleoside 5'-triphosphate + ADP. Its function is as follows. Major role in the synthesis of nucleoside triphosphates other than ATP. The ATP gamma phosphate is transferred to the NDP beta phosphate via a ping-pong mechanism, using a phosphorylated active-site intermediate. This chain is Nucleoside diphosphate kinase, found in Brevibacillus brevis (strain 47 / JCM 6285 / NBRC 100599).